A 142-amino-acid polypeptide reads, in one-letter code: Large ribosomal subunit protein bL17 (142 aa).

It belongs to the bacterial ribosomal protein bL17 family. Part of the 50S ribosomal subunit. Contacts protein L32.

This Chlamydia abortus (strain DSM 27085 / S26/3) (Chlamydophila abortus) protein is Large ribosomal subunit protein bL17.